Consider the following 363-residue polypeptide: Peptide chain release factor 1 (363 aa).

The residue at position 237 (Gln-237) is an N5-methylglutamine. Positions 286–295 are enriched in basic and acidic residues; sequence EKRRSAEATT. The tract at residues 286–305 is disordered; it reads EKRRSAEATTRRNLVGSGDR.

The protein belongs to the prokaryotic/mitochondrial release factor family. Methylated by PrmC. Methylation increases the termination efficiency of RF1.

It is found in the cytoplasm. In terms of biological role, peptide chain release factor 1 directs the termination of translation in response to the peptide chain termination codons UAG and UAA. The sequence is that of Peptide chain release factor 1 from Shewanella amazonensis (strain ATCC BAA-1098 / SB2B).